A 2409-amino-acid polypeptide reads, in one-letter code: Reducing polyketide synthase FUB1 (2409 aa).

Residues 1 to 43 show a composition bias toward low complexity; sequence MTLSNGSNGANGTSNGHGAHPSANGFHNAANGGANNGTPNGGA. The interval 1–49 is disordered; it reads MTLSNGSNGANGTSNGHGAHPSANGFHNAANGGANNGTPNGGAEYNASL. Positions 57 to 479 constitute a Ketosynthase family 3 (KS3) domain; the sequence is SSAIAVIGVS…GANAHAVLDD (423 aa). Residues Cys230, His365, and His403 each act as for beta-ketoacyl synthase activity in the active site. The interval 608 to 929 is malonyl-CoA:ACP transacylase (MAT) domain; sequence TFIFTGQGAQ…FSAIKRKQDA (322 aa). Ser699 serves as the catalytic For malonyltransferase activity. The tract at residues 994 to 1127 is N-terminal hotdog fold; it reads LELLGVRDPR…GLVSTSYKRE (134 aa). One can recognise a PKS/mFAS DH domain in the interval 994–1307; the sequence is LELLGVRDPR…TVPLRGASDP (314 aa). Residues 995 to 1302 form a dehydratase (DH) domain region; sequence ELLGVRDPRS…LEGCKTVPLR (308 aa). His1026 acts as the Proton acceptor; for dehydratase activity in catalysis. The tract at residues 1155–1307 is C-terminal hotdog fold; that stretch reads LPSVDPTVFY…TVPLRGASDP (153 aa). The active-site Proton donor; for dehydratase activity is Asp1220. The enoyl reductase (ER) domain stretch occupies residues 1713 to 2025; sequence GLLDTLEYLS…SGGHVGKIVL (313 aa). Residues 2049–2225 form a ketoreductase (KR) domain region; sequence ATYVLIGGLG…AATSINLSLV (177 aa). A Carrier domain is found at 2328-2405; sequence EVYEIVLQQL…GFAKKVMAKS (78 aa). Ser2365 bears the O-(pantetheine 4'-phosphoryl)serine mark.

It functions in the pathway mycotoxin biosynthesis. Reducing polyketide synthase; part of the gene cluster that mediates the biosynthesis of fusaric acid, a mycotoxin with low to moderate toxicity to animals and humans, but with high phytotoxic properties. L-aspartate is suggested as fusaric acid amino acid precursor that is activated and further processed to O-acetyl-L-homoserine by cluster enzymes aspartate kinase FUB3 and homoserine O-acetyltransferase FUB5, as well as enzymes of the primary metabolism. The polyketide synthase (PKS) FUB1 generates the triketide trans-2-hexenal which is presumptively released by the hydrolase FUB4 and linked to the NRPS-bound amino acid precursor by NAD(P)-dependent dehydrogenase FUB6. FUB1, FUB4, and the non-canonical NRPS Fub8 may form an enzyme complex. Further processing of the NRPS-bound intermediate might be carried out by FUB6 and the sulfhydrylase FUB7, enabling a spontaneous electrocyclization to close the carbon backbone of fusaric acid. Dihydrofusaric acid is likely to be released via reduction by the thioester reductase (TR) domain of FUB8 whereupon the final oxidation to fusaric acid may (also) be performed by the FMN-dependent dehydrogenase FUB9. This Gibberella moniliformis (strain M3125 / FGSC 7600) (Maize ear and stalk rot fungus) protein is Reducing polyketide synthase FUB1.